We begin with the raw amino-acid sequence, 285 residues long: Aquaporin PIP2-5 (285 aa).

2 helical membrane-spanning segments follow: residues 38–58 (AVIA…ATVI) and 75–95 (CGGV…FILV). Residues 107–109 (NPA) carry the NPA 1 motif. The next 3 helical transmembrane spans lie at 126–146 (LLYI…VKGF), 168–188 (GTGL…VFSA), and 202–222 (VLAP…TIPI). The NPA 2 motif lies at 228 to 230 (NPA). A helical transmembrane segment spans residues 250 to 270 (IFWVGPFIGAAIAAAYHQYVL).

The protein belongs to the MIP/aquaporin (TC 1.A.8) family. PIP (TC 1.A.8.11) subfamily. In terms of assembly, homomers. May interact with PIP1-2 to form heteromers. As to expression, specifically expressed in roots, in the exodermis, endodermis and xylem parenchyma. Polar localization to the external periclinal side of epidermal cells in root apices.

Its subcellular location is the cell membrane. Functionally, water channel required to facilitate the transport of water across cell membrane. Its function is impaired by Hg(2+). May play a role in water uptake from the root surface. Active as homomers. Increased activity when heteromerization with PIP1-2. In Zea mays (Maize), this protein is Aquaporin PIP2-5 (PIP2-5).